We begin with the raw amino-acid sequence, 200 residues long: Glycosyl hydrolase family 19 domain-containing protein HI_1415 (200 aa).

Belongs to the glycosyl hydrolase 19 family.

The sequence is that of Glycosyl hydrolase family 19 domain-containing protein HI_1415 from Haemophilus influenzae (strain ATCC 51907 / DSM 11121 / KW20 / Rd).